A 501-amino-acid polypeptide reads, in one-letter code: Probable cytosol aminopeptidase (501 aa).

Residues Lys-257 and Asp-262 each contribute to the Mn(2+) site. Lys-269 is a catalytic residue. Positions 281, 341, and 343 each coordinate Mn(2+). Residue Arg-345 is part of the active site.

Belongs to the peptidase M17 family. The cofactor is Mn(2+).

Its subcellular location is the cytoplasm. The catalysed reaction is Release of an N-terminal amino acid, Xaa-|-Yaa-, in which Xaa is preferably Leu, but may be other amino acids including Pro although not Arg or Lys, and Yaa may be Pro. Amino acid amides and methyl esters are also readily hydrolyzed, but rates on arylamides are exceedingly low.. It catalyses the reaction Release of an N-terminal amino acid, preferentially leucine, but not glutamic or aspartic acids.. In terms of biological role, presumably involved in the processing and regular turnover of intracellular proteins. Catalyzes the removal of unsubstituted N-terminal amino acids from various peptides. In Synechococcus sp. (strain RCC307), this protein is Probable cytosol aminopeptidase.